A 264-amino-acid polypeptide reads, in one-letter code: Adenosylcobinamide-GDP ribazoletransferase (264 aa).

The next 7 helical transmembrane spans lie at Leu10–Thr30, Leu43–Trp63, Leu113–Tyr133, Val141–Leu161, Val183–Trp203, Leu205–Phe225, and Gly243–Phe263.

It belongs to the CobS family. It depends on Mg(2+) as a cofactor.

It localises to the cell inner membrane. The enzyme catalyses alpha-ribazole + adenosylcob(III)inamide-GDP = adenosylcob(III)alamin + GMP + H(+). It catalyses the reaction alpha-ribazole 5'-phosphate + adenosylcob(III)inamide-GDP = adenosylcob(III)alamin 5'-phosphate + GMP + H(+). The protein operates within cofactor biosynthesis; adenosylcobalamin biosynthesis; adenosylcobalamin from cob(II)yrinate a,c-diamide: step 7/7. Joins adenosylcobinamide-GDP and alpha-ribazole to generate adenosylcobalamin (Ado-cobalamin). Also synthesizes adenosylcobalamin 5'-phosphate from adenosylcobinamide-GDP and alpha-ribazole 5'-phosphate. The polypeptide is Adenosylcobinamide-GDP ribazoletransferase (Leptothrix cholodnii (strain ATCC 51168 / LMG 8142 / SP-6) (Leptothrix discophora (strain SP-6))).